Reading from the N-terminus, the 295-residue chain is Glutamyl-Q tRNA(Asp) synthetase (295 aa).

Residues 9–13 and Glu-45 contribute to the L-glutamate site; that span reads RFAPT. Residues 12-22 carry the 'HIGH' region motif; it reads PTPSGYLHFGS. 4 residues coordinate Zn(2+): Cys-101, Cys-103, Tyr-115, and Cys-119. The L-glutamate site is built by Tyr-172 and Arg-190. Residues 228–232 carry the 'KMSKS' region motif; the sequence is KLGKS. Lys-231 provides a ligand contact to ATP.

Belongs to the class-I aminoacyl-tRNA synthetase family. GluQ subfamily. Zn(2+) serves as cofactor.

Catalyzes the tRNA-independent activation of glutamate in presence of ATP and the subsequent transfer of glutamate onto a tRNA(Asp). Glutamate is transferred on the 2-amino-5-(4,5-dihydroxy-2-cyclopenten-1-yl) moiety of the queuosine in the wobble position of the QUC anticodon. This chain is Glutamyl-Q tRNA(Asp) synthetase, found in Pseudomonas syringae pv. tomato (strain ATCC BAA-871 / DC3000).